Reading from the N-terminus, the 795-residue chain is MKFSELWLREWVNPAISSDDLAHQITMAGLEVDGVDAVAGEFNGVVVGHVVECGQHPNADKLRVTKIDVGGDRLLDIVCGAPNCRQGLKVAVATVGAVLPGDFKIKAAKLRGESSEGMLCSFSELAISDDHDGIIELPADAPIGVDVREYLHLDDKTIEISVTPNRADCLGIIGVARDVAVVNQLPLTEPDMAEVVASINDTLPIRVDAPQACPRYLGRVVKGINVKAATPLWMREKLRRCGIRSIDPVVDVTNFVLLELGQPMHAFDLDRISGGVIVRLATDGEELTLLDGTKAKLNADTLVIADHQKPLAMAGIFGGEHSGVNEETRNVLLESAFFNPLSITGRARRHGLHTDASHRYERGVDPALQHKAIERATRLLIDICGGEAGPVVDVTTASELPKQATITLRREKLDRLIGHHIPSEQVSDILRRLGCKVTECGSDWQAVAPSWRFDMAIEEDLVEEVARIYGYNNIPDVPVRADLVMTKHREASLSLKRVKTALVDRGYQEAITYSFVDPKVQALLHPQQEALILPNPISVDMSAMRLSLLTGLLSAVVYNQNRQQSRLRLFESGLRFVPDNTADLGIRQDVMLAGVIAGHRYDEHWDLARQPIDFYDLKGDLEAILELTGKLSDVQFRAEAHSALHPGQSAAIYLAGEHIGFIGVVHPELERKLDLNGRTVVFEVQWNKLADRAVPQAREISRFPANRRDIAVVVAENVPAEDILAECKKVGANQVVGVNLFDVYSGKGVAEGYKSLAISLVLQDTARTLEEEEIAATVAKCVEALKQRFQASLRD.

The 110-residue stretch at 39-148 (AGEFNGVVVG…ADAPIGVDVR (110 aa)) folds into the tRNA-binding domain. Residues 401-476 (PKQATITLRR…RIYGYNNIPD (76 aa)) form the B5 domain. Residues aspartate 454, aspartate 460, glutamate 463, and glutamate 464 each contribute to the Mg(2+) site. An FDX-ACB domain is found at 701 to 794 (SRFPANRRDI…LKQRFQASLR (94 aa)).

Belongs to the phenylalanyl-tRNA synthetase beta subunit family. Type 1 subfamily. Tetramer of two alpha and two beta subunits. The cofactor is Mg(2+).

The protein localises to the cytoplasm. It catalyses the reaction tRNA(Phe) + L-phenylalanine + ATP = L-phenylalanyl-tRNA(Phe) + AMP + diphosphate + H(+). This Yersinia pestis protein is Phenylalanine--tRNA ligase beta subunit.